The primary structure comprises 116 residues: Beta-2-microglobulin (116 aa).

An N-terminal signal peptide occupies residues 1–19 (MRAIITFALFCVLYVTVQG). Positions 24–110 (PKVQVYSHFP…VRHMNNKNIY (87 aa)) constitute an Ig-like C1-type domain. Residues C44 and C99 are joined by a disulfide bond.

This sequence belongs to the beta-2-microglobulin family. In terms of assembly, heterodimer of an alpha chain and a beta chain. Beta-2-microglobulin is the beta-chain of major histocompatibility complex class I molecules.

Its subcellular location is the secreted. Functionally, component of the class I major histocompatibility complex (MHC). Involved in the presentation of peptide antigens to the immune system. This Cyprinus carpio (Common carp) protein is Beta-2-microglobulin (b2m).